We begin with the raw amino-acid sequence, 177 residues long: Parathyroid hormone-related protein (177 aa).

The N-terminal stretch at 1–24 is a signal peptide; that stretch reads MLRRLVQQWGVAVFLLSYSVPSCG. The propeptide occupies 25–34; it reads RSVEELGRRL. The interval 57 to 68 is important for receptor binding; the sequence is RFFLHHLIAEIH. Positions 74–177 are disordered; that stretch reads ATSEVSPNSK…TSLELNLRRH (104 aa). The span at 76-90 shows a compositional bias: polar residues; that stretch reads SEVSPNSKPAPNTKN. The short motif at 108–129 is the Nuclear localization signal element; it reads TNKVETYKEQPLKTPGKKKKGK. A compositionally biased stretch (basic and acidic residues) spans 109–118; sequence NKVETYKEQP. A compositionally biased stretch (basic residues) spans 122–132; sequence PGKKKKGKPGK.

This sequence belongs to the parathyroid hormone family. As to quaternary structure, PTHrP interacts with PTH1R (via N-terminal extracellular domain). There are several secretory forms, including osteostatin, arising from endoproteolytic cleavage of the initial translation product. Each of these secretory forms is believed to have one or more of its own receptors that mediates the normal paracrine, autocrine and endocrine actions.

It localises to the secreted. Its subcellular location is the cytoplasm. The protein resides in the nucleus. In terms of biological role, neuroendocrine peptide which is a critical regulator of cellular and organ growth, development, migration, differentiation and survival and of epithelial calcium ion transport. Acts by binding to its receptor, PTH1R, activating G protein-coupled receptor signaling. Regulates endochondral bone development and epithelial-mesenchymal interactions during the formation of the mammary glands and teeth. Required for skeletal homeostasis. Promotes mammary mesenchyme differentiation and bud outgrowth by modulating mesenchymal cell responsiveness to BMPs. Up-regulates BMPR1A expression in the mammary mesenchyme and this increases the sensitivity of these cells to BMPs and allows them to respond to BMP4 in a paracrine and/or autocrine fashion. BMP4 signaling in the mesenchyme, in turn, triggers epithelial outgrowth and augments MSX2 expression, which causes the mammary mesenchyme to inhibit hair follicle formation within the nipple sheath. Potent inhibitor of osteoclastic bone resorption. This chain is Parathyroid hormone-related protein (PTHLH), found in Canis lupus familiaris (Dog).